The chain runs to 306 residues: N-acetylmuramic acid 6-phosphate etherase (306 aa).

Residues 59-222 enclose the SIS domain; that stretch reads ISEALRQGGR…STGAMVQLGK (164 aa). Glu87 (proton donor) is an active-site residue. The active site involves Glu118.

The protein belongs to the GCKR-like family. MurNAc-6-P etherase subfamily. As to quaternary structure, homodimer.

It carries out the reaction N-acetyl-D-muramate 6-phosphate + H2O = N-acetyl-D-glucosamine 6-phosphate + (R)-lactate. The protein operates within amino-sugar metabolism; N-acetylmuramate degradation. Functionally, specifically catalyzes the cleavage of the D-lactyl ether substituent of MurNAc 6-phosphate, producing GlcNAc 6-phosphate and D-lactate. This Gloeothece citriformis (strain PCC 7424) (Cyanothece sp. (strain PCC 7424)) protein is N-acetylmuramic acid 6-phosphate etherase.